A 179-amino-acid polypeptide reads, in one-letter code: ATP synthase subunit b (179 aa).

A helical transmembrane segment spans residues 27–47 (TAITFLVMLVVLGKFAWGPIV).

The protein belongs to the ATPase B chain family. In terms of assembly, F-type ATPases have 2 components, F(1) - the catalytic core - and F(0) - the membrane proton channel. F(1) has five subunits: alpha(3), beta(3), gamma(1), delta(1), epsilon(1). F(0) has three main subunits: a(1), b(2) and c(10-14). The alpha and beta chains form an alternating ring which encloses part of the gamma chain. F(1) is attached to F(0) by a central stalk formed by the gamma and epsilon chains, while a peripheral stalk is formed by the delta and b chains.

It localises to the cell inner membrane. F(1)F(0) ATP synthase produces ATP from ADP in the presence of a proton or sodium gradient. F-type ATPases consist of two structural domains, F(1) containing the extramembraneous catalytic core and F(0) containing the membrane proton channel, linked together by a central stalk and a peripheral stalk. During catalysis, ATP synthesis in the catalytic domain of F(1) is coupled via a rotary mechanism of the central stalk subunits to proton translocation. Its function is as follows. Component of the F(0) channel, it forms part of the peripheral stalk, linking F(1) to F(0). This is ATP synthase subunit b from Anaeromyxobacter sp. (strain K).